Consider the following 616-residue polypeptide: MTSSQDACYISLLGLAEYFRTSSPPNIKKCIQCLQALFTFKPPLKVEARTHLQLGQILMAYTKNTELARNHLEQAWMLSENINNFDDVKFDTASLLAQLYQQQEQSSLAKPVLRKAIELSQHNVYWHCKLLFQLAQTHATDKEYALASELLAVGVESTDESNATYLKSLFLLSRAMIMMIERKSSDVLAILNQAGTIIDNAIQNIHLKEYLKVFFFVLQVCHYLQLGQVKTVKTSLKQLQQSIQTIMAPNWPSDEQIFGQNSTEMFMWLPKEQLYVLVYLVTVSHSMMAGYMDKAQKYTEKALTQIEKLKSQENKPILAVFQIILLEHIIMCRLVMGNKSLAIKEIALAKDVCLSSSHKFLLKKHSPQLHCLLGLYSMSASLFDHAERQFYTCIQETTERDLKLFANLNLAIVYLRMKREPDLRAILDQVQQENSLCSNSQALMGSFYYVQGLNAFHKSSFHEAKRFLRETLKMANAEDLNRLTSCSLVLLSHVFLSIGNSKESMNMVTPAMQLASKIPDIHVQLWGSAILKDLHRMLKEPALEQEAYNNHLNFSQNLIADQLKCTKFQEHTLINWIQGDPPMPMLTTQEPMMGEPSQAAAMRVAAGAPGQQVIFQ.

3 TPR repeats span residues 90–123, 445–478, and 485–518; these read FDTASLLAQLYQQQEQSSLAKPVLRKAIELSQHN, GSFYYVQGLNAFHKSSFHEAKRFLRETLKMANAE, and SCSLVLLSHVFLSIGNSKESMNMVTPAMQLASKI.

Belongs to the SCC4/mau-2 family. In terms of assembly, component of the cohesin loading complex.

The protein localises to the nucleus. The protein resides in the nucleoplasm. Required for association of the cohesin complex with chromatin during interphase. Plays a role in sister chromatid cohesion and normal progression through prometaphase. This Culex quinquefasciatus (Southern house mosquito) protein is MAU2 chromatid cohesion factor homolog.